Reading from the N-terminus, the 474-residue chain is Glutamate--tRNA ligase (474 aa).

Residues 9 to 19 (PSPTGYLHVGG) carry the 'HIGH' region motif. Positions 240-244 (KLSKR) match the 'KMSKS' region motif. Lys-243 is an ATP binding site.

This sequence belongs to the class-I aminoacyl-tRNA synthetase family. Glutamate--tRNA ligase type 1 subfamily. As to quaternary structure, monomer.

It localises to the cytoplasm. It carries out the reaction tRNA(Glu) + L-glutamate + ATP = L-glutamyl-tRNA(Glu) + AMP + diphosphate. Its function is as follows. Catalyzes the attachment of glutamate to tRNA(Glu) in a two-step reaction: glutamate is first activated by ATP to form Glu-AMP and then transferred to the acceptor end of tRNA(Glu). The sequence is that of Glutamate--tRNA ligase from Vibrio vulnificus (strain CMCP6).